Consider the following 1052-residue polypeptide: Multidrug resistance protein MdtB (1052 aa).

The next 11 helical transmembrane spans lie at L15–G37, F345–L362, A367–L389, L396–N418, G438–F460, F472–M494, H535–I557, L867–I889, L909–V931, I968–A990, and M1000–F1022. The tract at residues K1032–Q1052 is disordered.

It belongs to the resistance-nodulation-cell division (RND) (TC 2.A.6) family. MdtB subfamily. As to quaternary structure, part of a tripartite efflux system composed of MdtA, MdtB and MdtC. MdtB forms a heteromultimer with MdtC.

It localises to the cell inner membrane. In Yersinia pseudotuberculosis serotype I (strain IP32953), this protein is Multidrug resistance protein MdtB.